Here is a 244-residue protein sequence, read N- to C-terminus: N-(5'-phosphoribosyl)anthranilate isomerase 3, chloroplastic (244 aa).

Residues 1 to 32 (MSTGISSDLHLHPRALNFSKTSKSGLSNRKVS) constitute a chloroplast transit peptide.

Belongs to the TrpF family.

It is found in the plastid. Its subcellular location is the chloroplast. It catalyses the reaction N-(5-phospho-beta-D-ribosyl)anthranilate = 1-(2-carboxyphenylamino)-1-deoxy-D-ribulose 5-phosphate. It participates in amino-acid biosynthesis; L-tryptophan biosynthesis; L-tryptophan from chorismate: step 3/5. In Arabidopsis thaliana (Mouse-ear cress), this protein is N-(5'-phosphoribosyl)anthranilate isomerase 3, chloroplastic (PAI3).